A 338-amino-acid polypeptide reads, in one-letter code: UPF0324 membrane protein NMA0465 (338 aa).

A run of 10 helical transmembrane segments spans residues 5 to 23 (PFYF…ANYL), 33 to 55 (HISA…YPQF), 62 to 84 (GVLF…RLTF), 94 to 116 (AVVT…GIRY), 123 to 145 (LVYL…AESV), 155 to 177 (VAIA…FYTW), 222 to 239 (IRVM…WLLT), 254 to 273 (IPWF…FDLL), 280 to 302 (LFVE…TTHA), and 312 to 334 (PFVL…NYGI).

Belongs to the UPF0324 family.

Its subcellular location is the cell membrane. This Neisseria meningitidis serogroup A / serotype 4A (strain DSM 15465 / Z2491) protein is UPF0324 membrane protein NMA0465.